Consider the following 124-residue polypeptide: Small ribosomal subunit protein uS12 (124 aa).

The interval 1–32 is disordered; it reads MPTIQQLVRKGREDKVVKTKTPALKGSPQRRG. Position 89 is a 3-methylthioaspartic acid (Asp-89). The segment at 105–124 is disordered; the sequence is QGVKNRKQARSRYGAKKEKS. A compositionally biased stretch (basic residues) spans 108-118; sequence KNRKQARSRYG.

It belongs to the universal ribosomal protein uS12 family. In terms of assembly, part of the 30S ribosomal subunit. Contacts proteins S8 and S17. May interact with IF1 in the 30S initiation complex.

With S4 and S5 plays an important role in translational accuracy. Functionally, interacts with and stabilizes bases of the 16S rRNA that are involved in tRNA selection in the A site and with the mRNA backbone. Located at the interface of the 30S and 50S subunits, it traverses the body of the 30S subunit contacting proteins on the other side and probably holding the rRNA structure together. The combined cluster of proteins S8, S12 and S17 appears to hold together the shoulder and platform of the 30S subunit. The chain is Small ribosomal subunit protein uS12 from Kineococcus radiotolerans (strain ATCC BAA-149 / DSM 14245 / SRS30216).